We begin with the raw amino-acid sequence, 395 residues long: Xylose isomerase (395 aa).

Residues His54 and Glu57 contribute to the active site. A disordered region spans residues 80-108 (AVPAGAGRDRHEGADGDDEPVHAPGCSRD). Mg(2+) is bound by residues Glu189, Glu225, His228, Asp253, Asp263, Asp265, and Asp295.

Belongs to the xylose isomerase family. Homotetramer. It depends on Mg(2+) as a cofactor.

Its subcellular location is the cytoplasm. It carries out the reaction alpha-D-xylose = alpha-D-xylulofuranose. The polypeptide is Xylose isomerase (Streptomyces lividans).